Reading from the N-terminus, the 193-residue chain is Bcl-2-like protein 2 (193 aa).

Ala-2 carries the N-acetylalanine modification. Positions 9–29 (DTRALVADFVGYKLRQKGYVC) match the BH4 motif. A BH1 motif is present at residues 85-104 (ELFQGGPNWGRLVAFFVFGA). The BH2 signature appears at 136-151 (DWIHSSGGWAEFTALY).

It belongs to the Bcl-2 family. Interacts with HIF3A (via C-terminus domain). Interacts with BOP.

It is found in the mitochondrion membrane. Functionally, promotes cell survival. Blocks dexamethasone-induced apoptosis. Mediates survival of postmitotic Sertoli cells by suppressing death-promoting activity of BAX. The chain is Bcl-2-like protein 2 (BCL2L2) from Bos taurus (Bovine).